The sequence spans 434 residues: Glutamyl-tRNA reductase (434 aa).

Residues 49–52, Ser-109, 114–116, and Gln-120 contribute to the substrate site; these read TCNR and EPQ. Cys-50 serves as the catalytic Nucleophile. 189 to 194 provides a ligand contact to NADP(+); that stretch reads GAGEMC.

Belongs to the glutamyl-tRNA reductase family. As to quaternary structure, homodimer.

The catalysed reaction is (S)-4-amino-5-oxopentanoate + tRNA(Glu) + NADP(+) = L-glutamyl-tRNA(Glu) + NADPH + H(+). It functions in the pathway porphyrin-containing compound metabolism; protoporphyrin-IX biosynthesis; 5-aminolevulinate from L-glutamyl-tRNA(Glu): step 1/2. Functionally, catalyzes the NADPH-dependent reduction of glutamyl-tRNA(Glu) to glutamate 1-semialdehyde (GSA). This chain is Glutamyl-tRNA reductase, found in Trichlorobacter lovleyi (strain ATCC BAA-1151 / DSM 17278 / SZ) (Geobacter lovleyi).